Here is a 173-residue protein sequence, read N- to C-terminus: MKSFIEVAKPVVDSGIYMCAKFDQASCEALAQVQKLLGVENPVSAEKLHTTIVYSRKTVDLFPASGISEPARLVDVEKWDTKYGNTIVGVLESDYLHSRFNDAMDAGATYDFDNYKPHVTLAYDSRIEDISGVKRLLTLPVDLTIIKEDAESLDLDKTVEDITEHIEHRGESS.

Tyr-17 provides a ligand contact to 3',3'-cGAMP. Tyr-17 is a 3',3'-cUAMP binding site. Catalysis depends on residues His-49, Thr-51, His-118, and Thr-120. Residue Glu-151 participates in 3',3'-cGAMP binding. Residue Glu-151 coordinates 3',3'-cUAMP.

It belongs to the anti-CBASS protein Acb1 family.

It carries out the reaction 3',3'-cUAMP + H2O = U[3'-5']pAp[3'] + H(+). It catalyses the reaction 3',3',3'-c-tri-AMP + H2O = A[3'-5']pA[3'-5']pAp[3'] + H(+). The enzyme catalyses 3',3',3'-cAAG + H2O = G[3'-5']pA[3'-5']pAp[3'] + H(+). The catalysed reaction is 3',3',3'-cAAG + H2O = A[3'-5']pG[3'-5']pAp[3'] + H(+). It carries out the reaction 3',3'-cGAMP + H2O = G[3'-5']pAp[3'] + H(+). Counteracts the host CBASS antiviral defense system. Phosphodiesterase that enables metal-independent hydrolysis of the host cyclic di- and trinucleotide CBASS signals such as 3'3'-cGAMP, 3'3'cUA, and 3'3'3'-cAAA. Does not cleave cGG or cA4. Besides evasion of the CBASS system, might also enable evasion of the type III CRISPR systems that use cA3 signals. The polypeptide is Anti-CBASS protein Acb1 (Escherichia phage RB16).